The sequence spans 154 residues: Interleukin-2 (154 aa).

Residues 1 to 20 (MYRMQLLSCIALSLALVTNS) form the signal peptide. O-linked (GalNAc...) threonine glycosylation is present at T23. The cysteines at positions 78 and 126 are disulfide-linked.

Belongs to the IL-2 family.

The protein localises to the secreted. Cytokine produced by activated CD4-positive helper T-cells and to a lesser extend activated CD8-positive T-cells and natural killer (NK) cells that plays pivotal roles in the immune response and tolerance. Binds to a receptor complex composed of either the high-affinity trimeric IL-2R (IL2RA/CD25, IL2RB/CD122 and IL2RG/CD132) or the low-affinity dimeric IL-2R (IL2RB and IL2RG). Interaction with the receptor leads to oligomerization and conformation changes in the IL-2R subunits resulting in downstream signaling starting with phosphorylation of JAK1 and JAK3. In turn, JAK1 and JAK3 phosphorylate the receptor to form a docking site leading to the phosphorylation of several substrates including STAT5. This process leads to activation of several pathways including STAT, phosphoinositide-3-kinase/PI3K and mitogen-activated protein kinase/MAPK pathways. Functions as a T-cell growth factor and can increase NK-cell cytolytic activity as well. Promotes strong proliferation of activated B-cells and subsequently immunoglobulin production. Plays a pivotal role in regulating the adaptive immune system by controlling the survival and proliferation of regulatory T-cells, which are required for the maintenance of immune tolerance. Moreover, participates in the differentiation and homeostasis of effector T-cell subsets, including Th1, Th2, Th17 as well as memory CD8-positive T-cells. The sequence is that of Interleukin-2 (IL2) from Macaca mulatta (Rhesus macaque).